Consider the following 322-residue polypeptide: Phthalate dioxygenase reductase (322 aa).

Residues 7 to 109 (DGFLRLKIAS…SLPRNEFPLD (103 aa)) form the FAD-binding FR-type domain. Residues 56-57 (RT), 73-75 (AVK), 81-84 (RGGS), threonine 125, and phenylalanine 226 each bind FMN. A 2Fe-2S ferredoxin-type domain is found at 239-322 (FTVRLSRSGT…AKSAELVLDL (84 aa)). Position 273 (cysteine 273) interacts with [2Fe-2S] cluster. Serine 275 contributes to the FMN binding site. Residues cysteine 278, cysteine 281, and cysteine 309 each contribute to the [2Fe-2S] cluster site.

The protein belongs to the PDR/VanB family. In terms of assembly, monomer. FMN serves as cofactor.

Functionally, component of the electron transfer chain involved in pyridine nucleotide-dependent dihydroxylation of phthalate. Utilizes FMN to mediate electron transfer from the two-electron donor, NADH, to the one-electron acceptor, (2Fe-2S). This is Phthalate dioxygenase reductase (ophA1) from Burkholderia cepacia (Pseudomonas cepacia).